The sequence spans 83 residues: Small ribosomal subunit protein bS16 (83 aa).

Belongs to the bacterial ribosomal protein bS16 family.

This Ectopseudomonas mendocina (strain ymp) (Pseudomonas mendocina) protein is Small ribosomal subunit protein bS16.